Reading from the N-terminus, the 690-residue chain is Glycine--tRNA ligase beta subunit (690 aa).

Belongs to the class-II aminoacyl-tRNA synthetase family. Tetramer of two alpha and two beta subunits.

The protein resides in the cytoplasm. It catalyses the reaction tRNA(Gly) + glycine + ATP = glycyl-tRNA(Gly) + AMP + diphosphate. The protein is Glycine--tRNA ligase beta subunit of Syntrophus aciditrophicus (strain SB).